A 260-amino-acid chain; its full sequence is MSFKRDGDDSSQLNVLKKRRVADLLASYIPEDEALLLKNGSYACTVCHHRPVFNTIDMLSVHRTGKKHLGGLQRYYGKKLEHKNEIQKRRHFDFVRAEDAGEKPPPGPAPLLVQTKRITQNALLKSAPYNSCCSNKKVVANSRNVYDPHSGPSTTTGLNVPLDTQPGPSQPHTSLHSPPTGPCSSPTDEIPPNKNNSRHKKKGEEKFRKEIADPERERNMEHYLQLKSSGWIPDGTGKWVKDENVEFDSDEEEPPALPPS.

A Bipartite nuclear localization signal motif is present at residues 4–20; sequence KRDGDDSSQLNVLKKRR. Residues 42 to 74 form a Matrin-type zinc finger; the sequence is YACTVCHHRPVFNTIDMLSVHRTGKKHLGGLQR. The disordered stretch occupies residues 143–260; the sequence is RNVYDPHSGP…EEEPPALPPS (118 aa). Over residues 166-187 the composition is skewed to polar residues; sequence PGPSQPHTSLHSPPTGPCSSPT. Basic and acidic residues predominate over residues 202–221; it reads KGEEKFRKEIADPERERNME. Residues 245-254 show a composition bias toward acidic residues; the sequence is VEFDSDEEEP.

Component of the minor spliceosome, which splices U12-type introns.

Its subcellular location is the nucleus. The protein localises to the nucleoplasm. It is found in the nucleus speckle. Its function is as follows. As a component of the minor spliceosome, involved in the splicing of U12-type introns in pre-mRNAs. This Xenopus laevis (African clawed frog) protein is Sodium channel modifier 1 (scnm1).